The sequence spans 178 residues: Peptide deformylase (178 aa).

Fe cation contacts are provided by C92 and H134. The active site involves E135. A Fe cation-binding site is contributed by H138.

Belongs to the polypeptide deformylase family. It depends on Fe(2+) as a cofactor.

It catalyses the reaction N-terminal N-formyl-L-methionyl-[peptide] + H2O = N-terminal L-methionyl-[peptide] + formate. Functionally, removes the formyl group from the N-terminal Met of newly synthesized proteins. Requires at least a dipeptide for an efficient rate of reaction. N-terminal L-methionine is a prerequisite for activity but the enzyme has broad specificity at other positions. In Alkalilimnicola ehrlichii (strain ATCC BAA-1101 / DSM 17681 / MLHE-1), this protein is Peptide deformylase.